The primary structure comprises 146 residues: Hemoglobin subunit beta (146 aa).

The Globin domain maps to 2-146 (FLTAEEKSLV…VANALAHKYH (145 aa)). Ser44 carries the phosphoserine modification. An N6-acetyllysine modification is found at Lys59. Residue His63 coordinates heme b. Lys82 bears the N6-acetyllysine mark. Position 92 (His92) interacts with heme b. Position 93 is an S-nitrosocysteine (Cys93). At Lys144 the chain carries N6-acetyllysine.

The protein belongs to the globin family. As to quaternary structure, heterotetramer of two alpha chains and two beta chains. In terms of tissue distribution, red blood cells.

Its function is as follows. Involved in oxygen transport from the lung to the various peripheral tissues. In Proteles cristata (Aardwolf), this protein is Hemoglobin subunit beta (HBB).